The primary structure comprises 178 residues: Large ribosomal subunit protein uL5 (178 aa).

It belongs to the universal ribosomal protein uL5 family. Part of the 50S ribosomal subunit; part of the 5S rRNA/L5/L18/L25 subcomplex. Contacts the 5S rRNA and the P site tRNA. Forms a bridge to the 30S subunit in the 70S ribosome.

Its function is as follows. This is one of the proteins that bind and probably mediate the attachment of the 5S RNA into the large ribosomal subunit, where it forms part of the central protuberance. In the 70S ribosome it contacts protein S13 of the 30S subunit (bridge B1b), connecting the 2 subunits; this bridge is implicated in subunit movement. Contacts the P site tRNA; the 5S rRNA and some of its associated proteins might help stabilize positioning of ribosome-bound tRNAs. In Psychrobacter cryohalolentis (strain ATCC BAA-1226 / DSM 17306 / VKM B-2378 / K5), this protein is Large ribosomal subunit protein uL5.